We begin with the raw amino-acid sequence, 830 residues long: AdoMet-dependent rRNA methyltransferase SPB1 (830 aa).

G58, W60, D78, D94, and D119 together coordinate S-adenosyl-L-methionine. Catalysis depends on K159, which acts as the Proton acceptor. The stretch at 345–388 (LTEEEQIEKELQEMQQKQNLKKKREKRKQNEIKQKEITRMQMQM) forms a coiled coil. Disordered regions lie at residues 485–529 (AKEA…SDSD) and 565–642 (EADL…AREV). Acidic residues-rich tracts occupy residues 516-529 (VDDD…SDSD), 591-610 (VSEE…DSDF), and 618-630 (DESD…EDEA). The segment covering 631-642 (ERSQKEKHAREV) has biased composition (basic and acidic residues).

Belongs to the class I-like SAM-binding methyltransferase superfamily. RNA methyltransferase RlmE family. SPB1 subfamily. As to quaternary structure, component of the nucleolar and nucleoplasmic pre-60S ribosomal particle.

It is found in the nucleus. Its subcellular location is the nucleolus. The catalysed reaction is a ribonucleotide in rRNA + S-adenosyl-L-methionine = a 2'-O-methylribonucleotide in rRNA + S-adenosyl-L-homocysteine + H(+). Its function is as follows. Required for proper assembly of pre-ribosomal particles during the biogenesis of the 60S ribosomal subunit. The polypeptide is AdoMet-dependent rRNA methyltransferase SPB1 (Eremothecium gossypii (strain ATCC 10895 / CBS 109.51 / FGSC 9923 / NRRL Y-1056) (Yeast)).